We begin with the raw amino-acid sequence, 103 residues long: Large ribosomal subunit protein uL24 (103 aa).

It belongs to the universal ribosomal protein uL24 family. As to quaternary structure, part of the 50S ribosomal subunit.

One of two assembly initiator proteins, it binds directly to the 5'-end of the 23S rRNA, where it nucleates assembly of the 50S subunit. In terms of biological role, one of the proteins that surrounds the polypeptide exit tunnel on the outside of the subunit. This chain is Large ribosomal subunit protein uL24, found in Mannheimia succiniciproducens (strain KCTC 0769BP / MBEL55E).